The chain runs to 388 residues: Succinate--CoA ligase [ADP-forming] subunit beta (388 aa).

One can recognise an ATP-grasp domain in the interval 9 to 244 (KSLFAEYGLP…PSQDDAREAH (236 aa)). Residues Lys46, 53 to 55 (GRG), Glu99, Thr102, and Glu107 each bind ATP. Residues Asn199 and Asp213 each coordinate Mg(2+). Substrate-binding positions include Asn264 and 321 to 323 (GIV).

It belongs to the succinate/malate CoA ligase beta subunit family. Heterotetramer of two alpha and two beta subunits. Mg(2+) serves as cofactor.

The catalysed reaction is succinate + ATP + CoA = succinyl-CoA + ADP + phosphate. It catalyses the reaction GTP + succinate + CoA = succinyl-CoA + GDP + phosphate. It functions in the pathway carbohydrate metabolism; tricarboxylic acid cycle; succinate from succinyl-CoA (ligase route): step 1/1. In terms of biological role, succinyl-CoA synthetase functions in the citric acid cycle (TCA), coupling the hydrolysis of succinyl-CoA to the synthesis of either ATP or GTP and thus represents the only step of substrate-level phosphorylation in the TCA. The beta subunit provides nucleotide specificity of the enzyme and binds the substrate succinate, while the binding sites for coenzyme A and phosphate are found in the alpha subunit. The protein is Succinate--CoA ligase [ADP-forming] subunit beta of Shewanella oneidensis (strain ATCC 700550 / JCM 31522 / CIP 106686 / LMG 19005 / NCIMB 14063 / MR-1).